The following is a 499-amino-acid chain: Putative lipase atg15 (499 aa).

Residues 1–9 (MSIGEVSDS) lie on the Cytoplasmic side of the membrane. Residues 10 to 30 (AGHLASLVLPIEVAPIAPLIP) form a helical; Signal-anchor for type II membrane protein membrane-spanning segment. At 31–499 (EPPATAEHIF…PDSPERNEEM (469 aa)) the chain is on the lumenal side. N-linked (GlcNAc...) asparagine glycosylation is found at Asn170, Asn191, Asn192, Asn250, and Asn274. The active-site Charge relay system is the Ser290. N-linked (GlcNAc...) asparagine glycosylation is present at Asn436. The segment at 436 to 499 (NGTETTTTSS…PDSPERNEEM (64 aa)) is disordered. The segment covering 438–454 (TETTTTSSAPTTTSISR) has biased composition (low complexity).

This sequence belongs to the AB hydrolase superfamily. Lipase family. In terms of assembly, binds to both phosphatidylinositol (PI) and phosphatidylinositol 3,5-bisphosphate (PIP2).

It is found in the endosome. The protein resides in the multivesicular body membrane. It localises to the prevacuolar compartment membrane. It catalyses the reaction a triacylglycerol + H2O = a diacylglycerol + a fatty acid + H(+). In terms of biological role, lipase which is essential for lysis of subvacuolar cytoplasm to vacuole targeted bodies and intravacuolar autophagic bodies. Involved in the lysis of intravacuolar multivesicular body (MVB) vesicles. The intravacuolar membrane disintegration by atg15 is critical to life span extension. This is Putative lipase atg15 (atg15) from Chaetomium globosum (strain ATCC 6205 / CBS 148.51 / DSM 1962 / NBRC 6347 / NRRL 1970) (Soil fungus).